A 440-amino-acid polypeptide reads, in one-letter code: 3-phosphoshikimate 1-carboxyvinyltransferase (440 aa).

K28, S29, and R33 together coordinate 3-phosphoshikimate. Position 28 (K28) interacts with phosphoenolpyruvate. Phosphoenolpyruvate contacts are provided by G98 and R126. 3-phosphoshikimate-binding residues include S171, Q173, D318, and K345. Q173 contacts phosphoenolpyruvate. Residue D318 is the Proton acceptor of the active site. Positions 349 and 391 each coordinate phosphoenolpyruvate.

Belongs to the EPSP synthase family. As to quaternary structure, monomer.

It is found in the cytoplasm. It catalyses the reaction 3-phosphoshikimate + phosphoenolpyruvate = 5-O-(1-carboxyvinyl)-3-phosphoshikimate + phosphate. It functions in the pathway metabolic intermediate biosynthesis; chorismate biosynthesis; chorismate from D-erythrose 4-phosphate and phosphoenolpyruvate: step 6/7. Catalyzes the transfer of the enolpyruvyl moiety of phosphoenolpyruvate (PEP) to the 5-hydroxyl of shikimate-3-phosphate (S3P) to produce enolpyruvyl shikimate-3-phosphate and inorganic phosphate. The protein is 3-phosphoshikimate 1-carboxyvinyltransferase of Anaeromyxobacter dehalogenans (strain 2CP-C).